We begin with the raw amino-acid sequence, 360 residues long: Replication-associated protein (360 aa).

Residues serine 11–phenylalanine 114 enclose the CRESS-DNA virus Rep endonuclease domain. The short motif at phenylalanine 18–tyrosine 21 is the RCR-1 element. A divalent metal cation-binding residues include glutamate 52, histidine 60, and histidine 62. Residues histidine 60–histidine 62 carry the RCR-2 motif. The active-site For DNA cleavage activity is tyrosine 100. Positions tyrosine 100–lysine 103 match the RCR-3 motif. Glutamate 104 serves as a coordination point for a divalent metal cation. The tract at residues serine 175 to phenylalanine 187 is oligomerization. Glycine 229–serine 236 provides a ligand contact to ATP. A transactivation region spans residues valine 252–proline 270. The Nuclear localization signal signature appears at lysine 292 to serine 303.

Belongs to the geminiviridae Rep protein family. In terms of assembly, homooligomer. Rep binds to repeated DNA motifs (iterons). Forms the O-complex, which is a Rep-DNA complex involved in the initiation of RCR. Part of the C- and V-complexes which are RepA-Rep-DNA complexes involved in the c-sense and v-sense transcription. The cofactor is Mg(2+). Requires Mn(2+) as cofactor.

The protein resides in the host nucleus. In terms of biological role, essential for the replication of viral ssDNA. The closed circular ssDNA genome is first converted to a superhelical dsDNA. Rep binds a specific region at the genome origin of replication. It introduces an endonucleolytic nick within the conserved sequence 5'-TAATATTAC-3' in the intergenic region of the genome present in all geminiviruses, thereby initiating the rolling circle replication (RCR). Following cleavage, binds covalently to the 5'-phosphate of DNA as a tyrosyl ester. The cleavage gives rise to a free 3'-OH that serves as a primer for the cellular DNA polymerase. The polymerase synthesizes the (+) strand DNA by rolling circle mechanism. After one round of replication, a Rep-catalyzed nucleotidyl transfer reaction releases a circular single-stranded virus genome, thereby terminating the replication. Displays origin-specific DNA cleavage, nucleotidyl transferase, ATPase and helicase activities. Acts as an inhibitor of C-sense gene transcription. In Avena sativa (Oat), this protein is Replication-associated protein.